We begin with the raw amino-acid sequence, 141 residues long: Hemoglobin subunit alpha (141 aa).

Positions 1 to 141 (VLSDNDKTNV…VSTVLTSKYR (141 aa)) constitute a Globin domain. The residue at position 3 (Ser-3) is a Phosphoserine. Lys-7 carries the N6-succinyllysine modification. Thr-8 carries the phosphothreonine modification. N6-succinyllysine is present on Lys-11. Lys-16 carries the N6-acetyllysine; alternate modification. Lys-16 is modified (N6-succinyllysine; alternate). Tyr-24 is subject to Phosphotyrosine. Residue Ser-35 is modified to Phosphoserine. N6-succinyllysine is present on Lys-40. Position 58 (His-58) interacts with O2. His-87 provides a ligand contact to heme b. Phosphoserine is present on Ser-102. Thr-108 carries the phosphothreonine modification. The residue at position 124 (Ser-124) is a Phosphoserine. A phosphothreonine mark is found at Thr-134 and Thr-137. Ser-138 carries the post-translational modification Phosphoserine.

The protein belongs to the globin family. As to quaternary structure, heterotetramer of two alpha chains and two beta chains. As to expression, red blood cells.

Functionally, involved in oxygen transport from the lung to the various peripheral tissues. Its function is as follows. Hemopressin acts as an antagonist peptide of the cannabinoid receptor CNR1. Hemopressin-binding efficiently blocks cannabinoid receptor CNR1 and subsequent signaling. This Loxodonta africana (African elephant) protein is Hemoglobin subunit alpha (HBA).